The primary structure comprises 210 residues: Putative 3-methyladenine DNA glycosylase (210 aa).

It belongs to the DNA glycosylase MPG family.

In Lactobacillus acidophilus (strain ATCC 700396 / NCK56 / N2 / NCFM), this protein is Putative 3-methyladenine DNA glycosylase.